An 853-amino-acid chain; its full sequence is MAPRKKAVTKKKTVEKSPPIEEEIIEEPVDEIVESDGDDKKNKKKGKRKSSKKSKKEKEENVEEEEQDQEEEEEGNKKQKEENDADKKSRKHDEHRKKRDSKNRRSHSKSDENEEGEEDDEERRKKRRRRKHREKRKKNGNKEEEEEEEQDDEHEDQNVEEDEEDVNVEKQKQQQQQSDFDEEEKEEEKEEEEEEEQIEIKKRSKKRNSIDSGRKDKSKKRKSKKKKRGQNDDDDDDDDNDDDDDDQDEEKEYEQDEDVNQESIVSEKEEEEDEEKQSQGSEDEEKQSENERRNDQDYTDRERERNRSRDRDSRDYSSRSDHRDYRDRDRDRSRDRDRDYRDSRDYRDRDRDYRDRDRDHYSSGGSSSSSRDHRDHRDRDYRDRDRDHRDRSRDRDRDHYSSSSGSSSNRRSRDRDNDSKRDEKSSSSNNSNNSTSTTSNNNASSNNVKIVQPPKENFFSNYRAIQSSIIPTHNKSKFGERILSIAPTEPPPNFQIPLSKPYRDDSLQQNNDNNNNSSNNNSNNSNNNFNNDNNPYNNSNNYNMNNSNTSPYNNSNNSNSNSSYYNDNDYNNNNNNNNNSNNNNNNNNNNNNNNNNNNNNNNNNFNNSNSNSSESKPNYFNNLSNVFNQITKPLENYKNNGKNENNNNNNNKNKNEDEKRIDLVQTKLSLKSSKSTPQTYNEKEFKVQISNIVVKKLKKYYKTKITTKEDFQYLGKKFTDFVITKERGNQTINKDSEKKIEKVIDNYFEKKEVYDRKKDKDYKKDDGDKLINSSIDISNDSNLSESSITITSTSTSTSTSALTSPKTTGTTTSTITTVTSTSTSSIENTKILVDDEKFKTNIQNETSKESNSI.

The segment covering 1-11 (MAPRKKAVTKK) has biased composition (basic residues). Disordered stretches follow at residues 1–448 (MAPR…SNNV), 485–621 (IAPT…NYFN), and 635–658 (ENYKNNGKNENNNNNNNKNKNEDE). Residues 20 to 37 (IEEEIIEEPVDEIVESDG) are compositionally biased toward acidic residues. A compositionally biased stretch (basic residues) spans 42–55 (NKKKGKRKSSKKSK). The span at 60 to 74 (ENVEEEEQDQEEEEE) shows a compositional bias: acidic residues. The span at 75-87 (GNKKQKEENDADK) shows a compositional bias: basic and acidic residues. A compositionally biased stretch (basic residues) spans 88 to 107 (KSRKHDEHRKKRDSKNRRSH). A compositionally biased stretch (acidic residues) spans 112 to 121 (ENEEGEEDDE). Over residues 124 to 139 (RKKRRRRKHREKRKKN) the composition is skewed to basic residues. Composition is skewed to acidic residues over residues 143–166 (EEEEEEEQDDEHEDQNVEEDEEDV) and 179–197 (DFDEEEKEEEKEEEEEEEQ). Residues 216 to 228 (DKSKKRKSKKKKR) show a composition bias toward basic residues. Composition is skewed to acidic residues over residues 232 to 260 (DDDDDDDDNDDDDDDQDEEKEYEQDEDVN) and 268 to 286 (KEEEEDEEKQSQGSEDEEK). 3 stretches are compositionally biased toward basic and acidic residues: residues 287 to 361 (QSEN…RDHY), 370 to 400 (SRDHRDHRDRDYRDRDRDHRDRSRDRDRDHY), and 411 to 425 (RSRDRDNDSKRDEKS). 3 stretches are compositionally biased toward low complexity: residues 426-447 (SSSNNSNNSTSTTSNNNASSNN), 510-613 (NNDN…SNSS), and 636-652 (NYKNNGKNENNNNNNNK).

This is an uncharacterized protein from Dictyostelium discoideum (Social amoeba).